The following is a 313-amino-acid chain: Protein KRE1 (313 aa).

The signal sequence occupies residues 1–26 (MMRRTLLHSFATLLLSLSLWSAAVMA). Copy 1 of the repeat occupies 72 to 86 (TTTNDVGTTVTLTQT). The interval 72-141 (TTTNDVGTTV…LGTTVTLTQT (70 aa)) is 2 X approximate repeats. The segment at 94–114 (PTTTTSTSSTGKTTTTVPTAT) is disordered. Repeat unit 2 spans residues 127-141 (TTTNDLGTTVTLTQT). The segment covering 147–181 (TSATSSASSSVSSSVSSSGSSSSVKTTTSTGSAVA) has biased composition (low complexity). The interval 147–198 (TSATSSASSSVSSSVSSSGSSSSVKTTTSTGSAVAETGTRPDPSTDFTEPPV) is disordered. Residue N288 is the site of GPI-anchor amidated asparagine attachment. A propeptide spans 289-313 (EAQHLGMSSFTSILGGLLTVLIWFL) (removed in mature form).

This sequence belongs to the KRE1 family. Extensively modified; probably through addition of O-linked mannose residues. In terms of processing, the GPI-anchor is attached to the protein in the endoplasmic reticulum and serves to target the protein to the cell surface. There, the glucosamine-inositol phospholipid moiety is cleaved off and the GPI-modified mannoprotein is covalently attached via its lipidless GPI glycan remnant to the 1,6-beta-glucan of the outer cell wall layer.

It is found in the cell membrane. The protein resides in the secreted. The protein localises to the cell wall. Functionally, involved in a late stage of cell wall 1,6-beta-glucan synthesis and assembly. Has a structural, rather than enzymic, function within cell wall 1,6-beta-glucan assembly and architecture, possibly by being involved in covalently cross-linking 1,6-beta-glucans to other cell wall components such as 1,3-beta-glucan, chitin and certain mannoproteins. Acts as the plasma membrane receptor for the yeast K1 viral toxin. This is Protein KRE1 (KRE1) from Saccharomyces cerevisiae (strain ATCC 204508 / S288c) (Baker's yeast).